A 300-amino-acid chain; its full sequence is Tegument protein VP22 (300 aa).

Residues Met1–Ala148 form a disordered region. 2 stretches are compositionally biased toward basic and acidic residues: residues Cys10 to Leu22 and Pro50 to Glu61. Residues Gly163 to Lys166 carry the Nuclear localization signal motif. Positions Lys174–Val267 are interaction with gE. A Nuclear export signal motif is present at residues Leu232–Thr244. The segment covering Ala269 to Ala292 has biased composition (low complexity). Residues Ala269–Glu300 form a disordered region.

The protein belongs to the alphaherpesvirinae VP22 tegument protein family. As to quaternary structure, interacts with gE (via C-terminus); this interaction is necessary for the recruitment of VP22 to the Golgi and its packaging into virions. Interacts with gM (via C-terminus). Interacts with VP16; this interaction allows the formation of a tripartite complex composed of VP16, VP22 and UL41/VHS. Interacts with the capsid-binding protein UL16. Interacts with host CGAS. In terms of processing, highly phosphorylated in the host cell. Packaging is selective for underphosphorylated forms.

The protein localises to the virion tegument. The protein resides in the host cytoplasm. It is found in the host nucleus. It localises to the host Golgi apparatus. Its function is as follows. Tegument protein that plays different roles during the time course of infection. Participates in both the accumulation of viral mRNAs and viral protein translation at late time of infection. Modulates the RNase activity of the virion host shutoff protein UL41 probably to ensure necessary levels of key cellular mRNAs and proteins. Plays a role in microtubule reorganization that occurs after viral infection by stabilizing microtubule network. Plays a role in the inhibition of host innate immune system by targeting the CGAS enzymatic activity which is the principal cytosolic DNA sensor that detects invading viral DNA. Acts by mediating disruption of liquid-like droplets in which CGAS is activated, thereby preventing CGAS activity. This is Tegument protein VP22 from Homo sapiens (Human).